Consider the following 196-residue polypeptide: Large ribosomal subunit protein eL15 (196 aa).

The span at 69 to 98 (RKGGSRKQRHKAGRRSKRQGVNRLSRRKSI) shows a compositional bias: basic residues. Disordered stretches follow at residues 69–100 (RKGGSRKQRHKAGRRSKRQGVNRLSRRKSIQR) and 161–196 (FRGLTSAGTKGRGQRTRGTGTEKTRPSVTGNDRQGK). Positions 186 to 196 (PSVTGNDRQGK) are enriched in polar residues.

This sequence belongs to the eukaryotic ribosomal protein eL15 family.

The chain is Large ribosomal subunit protein eL15 from Halorubrum lacusprofundi (strain ATCC 49239 / DSM 5036 / JCM 8891 / ACAM 34).